A 157-amino-acid chain; its full sequence is 2-C-methyl-D-erythritol 2,4-cyclodiphosphate synthase (157 aa).

The a divalent metal cation site is built by D8 and H10. Residues 8 to 10 (DVH) and 34 to 35 (HS) each bind 4-CDP-2-C-methyl-D-erythritol 2-phosphate. H42 lines the a divalent metal cation pocket. 4-CDP-2-C-methyl-D-erythritol 2-phosphate contacts are provided by residues 56 to 58 (DIG), 61 to 65 (FPDTD), 100 to 106 (AQAPKMA), 132 to 135 (TTTE), F139, and R142.

This sequence belongs to the IspF family. In terms of assembly, homotrimer. A divalent metal cation is required as a cofactor.

It carries out the reaction 4-CDP-2-C-methyl-D-erythritol 2-phosphate = 2-C-methyl-D-erythritol 2,4-cyclic diphosphate + CMP. It functions in the pathway isoprenoid biosynthesis; isopentenyl diphosphate biosynthesis via DXP pathway; isopentenyl diphosphate from 1-deoxy-D-xylulose 5-phosphate: step 4/6. Its function is as follows. Involved in the biosynthesis of isopentenyl diphosphate (IPP) and dimethylallyl diphosphate (DMAPP), two major building blocks of isoprenoid compounds. Catalyzes the conversion of 4-diphosphocytidyl-2-C-methyl-D-erythritol 2-phosphate (CDP-ME2P) to 2-C-methyl-D-erythritol 2,4-cyclodiphosphate (ME-CPP) with a corresponding release of cytidine 5-monophosphate (CMP). This is 2-C-methyl-D-erythritol 2,4-cyclodiphosphate synthase from Stutzerimonas stutzeri (strain A1501) (Pseudomonas stutzeri).